Consider the following 616-residue polypeptide: General alpha-glucoside permease (616 aa).

Over 1–115 the chain is Cytoplasmic; it reads MKNIISLVSK…AALWSILVST (115 aa). Over residues 15–27 the composition is skewed to basic and acidic residues; it reads SKNEDKNISESSR. Residues 15 to 40 are disordered; it reads SKNEDKNISESSRDIVNQQEVFNTED. The helical transmembrane segment at 116-136 threads the bilayer; it reads TLVMEGYDTALLSALYALPVF. At 137-160 the chain is on the extracellular side; it reads QRKFGTLNGEGSYEITSQWQIGLN. A helical transmembrane segment spans residues 161–181; sequence MCVLCGEMIGLQITTYMVEFM. Over 182–191 the chain is Cytoplasmic; that stretch reads GNRYTMITAL. The helical transmembrane segment at 192-212 threads the bilayer; the sequence is GLLTAYIFILYYCKSLAMIAV. The Extracellular portion of the chain corresponds to 213-214; it reads GQ. The helical transmembrane segment at 215 to 235 threads the bilayer; sequence ILSAIPWGCFQSLAVTYASEV. Residues 236–242 are Cytoplasmic-facing; that stretch reads CPLALRY. Residues 243–263 traverse the membrane as a helical segment; the sequence is YMTSYSNICWLFGQIFASGIM. Over 264 to 278 the chain is Extracellular; sequence KNSQENLGNSDLGYK. Residues 279–299 form a helical membrane-spanning segment; sequence LPFALQWIWPAPLMIGIFFAP. The Cytoplasmic segment spans residues 300 to 373; the sequence is ESPWWLVRKD…VNGRRTRLAC (74 aa). Residues 374–394 form a helical membrane-spanning segment; the sequence is LTWVAQNSSGAVLLGYSTYFF. Topologically, residues 395–404 are extracellular; that stretch reads ERAGMATDKA. The helical transmembrane segment at 405 to 425 threads the bilayer; the sequence is FTFSLIQYCLGLAGTLCSWVI. The Cytoplasmic segment spans residues 426 to 433; it reads SGRVGRWT. A helical transmembrane segment spans residues 434 to 454; sequence ILTYGLAFQMVCLFIIGGMGF. The Extracellular portion of the chain corresponds to 455 to 466; the sequence is GSGSSASNGAGG. Residues 467–487 form a helical membrane-spanning segment; the sequence is LLLALSFFYNAGIGAVVYCIV. Topologically, residues 488–504 are cytoplasmic; that stretch reads AEIPSAELRTKTIVLAR. The chain crosses the membrane as a helical span at residues 505-525; it reads ICYNLMAVINAILTPYMLNVS. The Extracellular segment spans residues 526–532; it reads DWNWGAK. The helical transmembrane segment at 533–553 threads the bilayer; sequence TGLYWGGFTAVTLAWVIIDLP. Residues 554–616 lie on the Cytoplasmic side of the membrane; the sequence is ETTGRTFSEI…QRELNAADKC (63 aa). Positions 587–616 are disordered; that stretch reads GKTQHDSLADESISQSSSIKQRELNAADKC. Residues 606-616 are compositionally biased toward basic and acidic residues; the sequence is KQRELNAADKC.

Belongs to the major facilitator superfamily. Sugar transporter (TC 2.A.1.1) family.

Its subcellular location is the cell membrane. High-affinity uptake of alpha-glucosides such as maltose, turanose, isomaltose, alpha-methylglucoside, maltotriose, palatinose, trehalose, melezitose and glucose. Acts with the concomitant transport of protons into the cell (symport system). Provides an alternative and minor mechanism for growth on trehalose carbon source by transporting trehalose into the cytoplasm for conversion to glucose by neutral trehalase NTH1. The polypeptide is General alpha-glucoside permease (Saccharomyces cerevisiae (strain CEN.PK113-7D) (Baker's yeast)).